Here is a 697-residue protein sequence, read N- to C-terminus: Elongation factor G (697 aa).

Residues 6-281 (ENIRNIGICA…AVVDYLPSPI (276 aa)) form the tr-type G domain. GTP is bound by residues 15–22 (AHIDAGKT), 79–83 (DTPGH), and 133–136 (NKMD).

It belongs to the TRAFAC class translation factor GTPase superfamily. Classic translation factor GTPase family. EF-G/EF-2 subfamily.

The protein resides in the cytoplasm. Catalyzes the GTP-dependent ribosomal translocation step during translation elongation. During this step, the ribosome changes from the pre-translocational (PRE) to the post-translocational (POST) state as the newly formed A-site-bound peptidyl-tRNA and P-site-bound deacylated tRNA move to the P and E sites, respectively. Catalyzes the coordinated movement of the two tRNA molecules, the mRNA and conformational changes in the ribosome. This Rickettsia bellii (strain OSU 85-389) protein is Elongation factor G.